Here is a 225-residue protein sequence, read N- to C-terminus: DnaA regulatory inactivator Hda (225 aa).

The protein belongs to the DnaA family. HdA subfamily. As to quaternary structure, the active form seems to be an ADP-bound monomer. Forms the RIDA complex (regulatory inactivation of DnaA) of ATP-DnaA, ADP-Hda and the DNA-loaded beta sliding clamp (dnaN).

In terms of biological role, mediates the interaction of DNA replication initiator protein DnaA with DNA polymerase subunit beta sliding clamp (dnaN). Stimulates hydrolysis of ATP-DnaA to ADP-DnaA, rendering DnaA inactive for reinitiation, a process called regulatory inhibition of DnaA or RIDA. The polypeptide is DnaA regulatory inactivator Hda (Klebsiella pneumoniae (strain 342)).